The chain runs to 252 residues: 5'-nucleotidase SurE (252 aa).

Residues D8, D9, S39, and N95 each coordinate a divalent metal cation.

This sequence belongs to the SurE nucleotidase family. A divalent metal cation serves as cofactor.

It localises to the cytoplasm. The catalysed reaction is a ribonucleoside 5'-phosphate + H2O = a ribonucleoside + phosphate. Nucleotidase that shows phosphatase activity on nucleoside 5'-monophosphates. This is 5'-nucleotidase SurE from Clostridium botulinum (strain Kyoto / Type A2).